Reading from the N-terminus, the 251-residue chain is Methionine aminopeptidase (251 aa).

Substrate is bound at residue histidine 76. Positions 93, 104, and 168 each coordinate a divalent metal cation. A substrate-binding site is contributed by histidine 175. The a divalent metal cation site is built by glutamate 202 and glutamate 233.

The protein belongs to the peptidase M24A family. Methionine aminopeptidase type 1 subfamily. Monomer. Co(2+) serves as cofactor. Requires Zn(2+) as cofactor. It depends on Mn(2+) as a cofactor. The cofactor is Fe(2+).

It carries out the reaction Release of N-terminal amino acids, preferentially methionine, from peptides and arylamides.. Functionally, removes the N-terminal methionine from nascent proteins. The N-terminal methionine is often cleaved when the second residue in the primary sequence is small and uncharged (Met-Ala-, Cys, Gly, Pro, Ser, Thr, or Val). Requires deformylation of the N(alpha)-formylated initiator methionine before it can be hydrolyzed. This Staphylococcus epidermidis (strain ATCC 12228 / FDA PCI 1200) protein is Methionine aminopeptidase.